The primary structure comprises 282 residues: E3 ubiquitin-protein ligase SIAH1B (282 aa).

Residues 1–17 (MSRQAATALSTGTSKCP) are compositionally biased toward polar residues. Residues 1-23 (MSRQAATALSTGTSKCPPSQRVP) form a disordered region. At Ser-19 the chain carries Phosphoserine; by ATM and ATR. An RING-type zinc finger spans residues 41 to 76 (CPVCFDYVLPPILQCQSGHLVCSNCRPKLTCCPTCR). The interval 90 to 282 (VANSVLFPCK…LGINVTISMC (193 aa)) is SBD. The SIAH-type zinc-finger motif lies at 93–153 (SVLFPCKYSA…VMPHLMHQHK (61 aa)). Positions 98, 105, 117, 121, 128, 135, 147, and 152 each coordinate Zn(2+).

The protein belongs to the SINA (Seven in absentia) family. As to quaternary structure, homodimer. In terms of processing, phosphorylated on Ser-19 by ATM and ATR. As to expression, widely expressed at low level in embryos and adults. Due to the high similarity between SIAH1A and SIAH1B, it is difficult to distinguish its own tissue specificity. Overexpressed in endothelial cells of adult lung.

Its subcellular location is the cytoplasm. The protein localises to the nucleus. It carries out the reaction S-ubiquitinyl-[E2 ubiquitin-conjugating enzyme]-L-cysteine + [acceptor protein]-L-lysine = [E2 ubiquitin-conjugating enzyme]-L-cysteine + N(6)-ubiquitinyl-[acceptor protein]-L-lysine.. The protein operates within protein modification; protein ubiquitination. Functionally, E3 ubiquitin-protein ligase that mediates ubiquitination and subsequent proteasomal degradation of target proteins. E3 ubiquitin ligases accept ubiquitin from an E2 ubiquitin-conjugating enzyme in the form of a thioester and then directly transfers the ubiquitin to targeted substrates. Mediates E3 ubiquitin ligase activity either through direct binding to substrates or by functioning as the essential RING domain subunit of larger E3 complexes. The chain is E3 ubiquitin-protein ligase SIAH1B (Siah1b) from Mus musculus (Mouse).